Here is a 392-residue protein sequence, read N- to C-terminus: Bifunctional enzyme Fae/Hps (392 aa).

The segment at 1-161 (MFQIGEALMG…EESNKSTHAI (161 aa)) is formaldehyde-activating enzyme. Residue His17 is the Proton donor of the active site. Residues Asp19, Leu48, Lys66, Thr68, and Gln83 each coordinate substrate. The interval 162 to 392 (MGFKVTRLWD…IDQFRVMTDF (231 aa)) is 3-hexulose-6-phosphate synthase.

In the N-terminal section; belongs to the formaldehyde-activating enzyme family. The protein in the C-terminal section; belongs to the HPS/KGPDC family. HPS subfamily.

The enzyme catalyses 5,6,7,8-tetrahydromethanopterin + formaldehyde = 5,10-methylenetetrahydromethanopterin + H2O. It carries out the reaction D-ribulose 5-phosphate + formaldehyde = D-arabino-hex-3-ulose 6-phosphate. It functions in the pathway carbohydrate biosynthesis; D-ribose 5-phosphate biosynthesis. Functionally, catalyzes the condensation of formaldehyde with tetrahydromethanopterin (H(4)MPT) to 5,10-methylenetetrahydromethanopterin. In terms of biological role, catalyzes the reversible formation of ribulose-5-phosphate and formaldehyde from 3-hexulose-6-phosphate. In Methanosarcina acetivorans (strain ATCC 35395 / DSM 2834 / JCM 12185 / C2A), this protein is Bifunctional enzyme Fae/Hps.